The sequence spans 764 residues: Molybdenum cofactor sulfurase 3 (764 aa).

Residue Lys228 is modified to N6-(pyridoxal phosphate)lysine. Cys394 is an active-site residue. The MOSC domain maps to 607–762; it reads LRLLKQSDEE…LYCNSVVEGL (156 aa).

Belongs to the class-V pyridoxal-phosphate-dependent aminotransferase family. MOCOS subfamily. The cofactor is pyridoxal 5'-phosphate.

It carries out the reaction Mo-molybdopterin + L-cysteine + AH2 = thio-Mo-molybdopterin + L-alanine + A + H2O. In terms of biological role, sulfurates the molybdenum cofactor. Sulfation of molybdenum is essential for xanthine dehydrogenase (XDH) and aldehyde oxidase (ADO) enzymes in which molybdenum cofactor is liganded by 1 oxygen and 1 sulfur atom in active form. The chain is Molybdenum cofactor sulfurase 3 from Aedes aegypti (Yellowfever mosquito).